The chain runs to 317 residues: tRNA dimethylallyltransferase (317 aa).

An ATP-binding site is contributed by 19–26 (GPTASGKS). Substrate is bound at residue 21–26 (TASGKS). The interaction with substrate tRNA stretch occupies residues 44-47 (DSMQ).

The protein belongs to the IPP transferase family. In terms of assembly, monomer. It depends on Mg(2+) as a cofactor.

It catalyses the reaction adenosine(37) in tRNA + dimethylallyl diphosphate = N(6)-dimethylallyladenosine(37) in tRNA + diphosphate. In terms of biological role, catalyzes the transfer of a dimethylallyl group onto the adenine at position 37 in tRNAs that read codons beginning with uridine, leading to the formation of N6-(dimethylallyl)adenosine (i(6)A). This is tRNA dimethylallyltransferase from Methylorubrum populi (strain ATCC BAA-705 / NCIMB 13946 / BJ001) (Methylobacterium populi).